The sequence spans 114 residues: 11.9 kDa wall protein (114 aa).

Residues 1–6 constitute a propeptide that is removed on maturation; that stretch reads MSFKTR.

It is found in the secreted. The protein resides in the cell wall. In terms of biological role, may play a role in the structure of the hypha-forming fruit bodies. This is 11.9 kDa wall protein (TDF-1) from Tuber dryophilum (Truffle).